A 368-amino-acid chain; its full sequence is 3-dehydroquinate synthase (368 aa).

Residues 109–113 (GVIGD), 133–134 (TS), K146, K155, and 173–176 (TLQT) contribute to the NAD(+) site. Residues E188, H253, and H270 each contribute to the Zn(2+) site.

Belongs to the sugar phosphate cyclases superfamily. Dehydroquinate synthase family. The cofactor is Co(2+). Zn(2+) serves as cofactor. It depends on NAD(+) as a cofactor.

Its subcellular location is the cytoplasm. It catalyses the reaction 7-phospho-2-dehydro-3-deoxy-D-arabino-heptonate = 3-dehydroquinate + phosphate. It functions in the pathway metabolic intermediate biosynthesis; chorismate biosynthesis; chorismate from D-erythrose 4-phosphate and phosphoenolpyruvate: step 2/7. Functionally, catalyzes the conversion of 3-deoxy-D-arabino-heptulosonate 7-phosphate (DAHP) to dehydroquinate (DHQ). In Synechococcus sp. (strain ATCC 27144 / PCC 6301 / SAUG 1402/1) (Anacystis nidulans), this protein is 3-dehydroquinate synthase.